We begin with the raw amino-acid sequence, 163 residues long: Putative 4-hydroxy-4-methyl-2-oxoglutarate aldolase (163 aa).

Substrate-binding positions include 76 to 79 (GDML) and arginine 98. Aspartate 99 provides a ligand contact to a divalent metal cation.

Belongs to the class II aldolase/RraA-like family. Homotrimer. It depends on a divalent metal cation as a cofactor.

It catalyses the reaction 4-hydroxy-4-methyl-2-oxoglutarate = 2 pyruvate. The enzyme catalyses oxaloacetate + H(+) = pyruvate + CO2. Catalyzes the aldol cleavage of 4-hydroxy-4-methyl-2-oxoglutarate (HMG) into 2 molecules of pyruvate. Also contains a secondary oxaloacetate (OAA) decarboxylase activity due to the common pyruvate enolate transition state formed following C-C bond cleavage in the retro-aldol and decarboxylation reactions. In Pseudomonas putida (strain W619), this protein is Putative 4-hydroxy-4-methyl-2-oxoglutarate aldolase.